A 404-amino-acid chain; its full sequence is Protein ORF23 (404 aa).

Belongs to the lymphocryptovirus BTRF1 family. As to quaternary structure, interacts with ORF34.

It localises to the host nucleus. Its subcellular location is the host cytoplasm. In terms of biological role, plays a role in the expression of late genes. The polypeptide is Protein ORF23 (ORF23) (Homo sapiens (Human)).